A 207-amino-acid chain; its full sequence is 3-demethoxyubiquinol 3-hydroxylase (207 aa).

6 residues coordinate Fe cation: glutamate 56, glutamate 86, histidine 89, glutamate 138, glutamate 170, and histidine 173.

This sequence belongs to the COQ7 family. Fe cation serves as cofactor.

Its subcellular location is the cell membrane. It carries out the reaction a 5-methoxy-2-methyl-3-(all-trans-polyprenyl)benzene-1,4-diol + AH2 + O2 = a 3-demethylubiquinol + A + H2O. The protein operates within cofactor biosynthesis; ubiquinone biosynthesis. Functionally, catalyzes the hydroxylation of 2-nonaprenyl-3-methyl-6-methoxy-1,4-benzoquinol during ubiquinone biosynthesis. This chain is 3-demethoxyubiquinol 3-hydroxylase, found in Dechloromonas aromatica (strain RCB).